A 451-amino-acid polypeptide reads, in one-letter code: Trigger factor (451 aa).

The PPIase FKBP-type domain maps to 170-256 (DHIATIDYCE…LTALKYKDLP (87 aa)).

This sequence belongs to the FKBP-type PPIase family. Tig subfamily.

The protein localises to the cytoplasm. The catalysed reaction is [protein]-peptidylproline (omega=180) = [protein]-peptidylproline (omega=0). In terms of biological role, involved in protein export. Acts as a chaperone by maintaining the newly synthesized protein in an open conformation. Functions as a peptidyl-prolyl cis-trans isomerase. The chain is Trigger factor from Treponema denticola (strain ATCC 35405 / DSM 14222 / CIP 103919 / JCM 8153 / KCTC 15104).